A 255-amino-acid polypeptide reads, in one-letter code: MLVMAGLGLYDERDVTLKTLDFAKKVDKIYAEFYTAILTGTSMEKIENTLQKPITVLDREKVEYETNKLIEEAVDKDIMFLTAGDPMVATTHVDIAVEARKKGIEVVIINAPSIYSAIGITGLQLYKFGKTTSVVFPEPNYFPETPYDVIKDNLKLGYHTLCLLDIQADKERFMTANEGLDALLKIEEKRNENVISGETYAAVVARAGSIKPGLYYGKIKDLINYDFGTPLHCVIIPGKLHFMEEDALKYLFENI.

S-adenosyl-L-methionine contacts are provided by residues L9, D85, V88, 113–114, L164, A207, and H232; that span reads SI.

It belongs to the diphthine synthase family. In terms of assembly, homodimer.

It catalyses the reaction 2-[(3S)-amino-3-carboxypropyl]-L-histidyl-[translation elongation factor 2] + 3 S-adenosyl-L-methionine = diphthine-[translation elongation factor 2] + 3 S-adenosyl-L-homocysteine + 3 H(+). It functions in the pathway protein modification; peptidyl-diphthamide biosynthesis. In terms of biological role, S-adenosyl-L-methionine-dependent methyltransferase that catalyzes the trimethylation of the amino group of the modified target histidine residue in translation elongation factor 2 (EF-2), to form an intermediate called diphthine. The three successive methylation reactions represent the second step of diphthamide biosynthesis. The polypeptide is Diphthine synthase (Methanococcus maripaludis (strain C7 / ATCC BAA-1331)).